A 425-amino-acid polypeptide reads, in one-letter code: Serine--tRNA ligase 2 (425 aa).

An L-serine-binding site is contributed by 230 to 232 (TAE). 261-263 (REE) is a binding site for ATP. Glu284 serves as a coordination point for L-serine. 348 to 351 (EISS) serves as a coordination point for ATP. Ser383 lines the L-serine pocket.

Belongs to the class-II aminoacyl-tRNA synthetase family. Type-1 seryl-tRNA synthetase subfamily. As to quaternary structure, homodimer. The tRNA molecule binds across the dimer.

The protein resides in the cytoplasm. The enzyme catalyses tRNA(Ser) + L-serine + ATP = L-seryl-tRNA(Ser) + AMP + diphosphate + H(+). The catalysed reaction is tRNA(Sec) + L-serine + ATP = L-seryl-tRNA(Sec) + AMP + diphosphate + H(+). It participates in aminoacyl-tRNA biosynthesis; selenocysteinyl-tRNA(Sec) biosynthesis; L-seryl-tRNA(Sec) from L-serine and tRNA(Sec): step 1/1. Catalyzes the attachment of serine to tRNA(Ser). Is also able to aminoacylate tRNA(Sec) with serine, to form the misacylated tRNA L-seryl-tRNA(Sec), which will be further converted into selenocysteinyl-tRNA(Sec). In Lactiplantibacillus plantarum (strain ATCC BAA-793 / NCIMB 8826 / WCFS1) (Lactobacillus plantarum), this protein is Serine--tRNA ligase 2.